Consider the following 940-residue polypeptide: Isoleucine--tRNA ligase (940 aa).

The 'HIGH' region signature appears at 58–68 (PYANGSIHIGH). E564 is an L-isoleucyl-5'-AMP binding site. A 'KMSKS' region motif is present at residues 605 to 609 (KMSKS). K608 contributes to the ATP binding site. 4 residues coordinate Zn(2+): C903, C906, C923, and C926.

It belongs to the class-I aminoacyl-tRNA synthetase family. IleS type 1 subfamily. In terms of assembly, monomer. It depends on Zn(2+) as a cofactor.

It localises to the cytoplasm. It carries out the reaction tRNA(Ile) + L-isoleucine + ATP = L-isoleucyl-tRNA(Ile) + AMP + diphosphate. In terms of biological role, catalyzes the attachment of isoleucine to tRNA(Ile). As IleRS can inadvertently accommodate and process structurally similar amino acids such as valine, to avoid such errors it has two additional distinct tRNA(Ile)-dependent editing activities. One activity is designated as 'pretransfer' editing and involves the hydrolysis of activated Val-AMP. The other activity is designated 'posttransfer' editing and involves deacylation of mischarged Val-tRNA(Ile). This Shewanella woodyi (strain ATCC 51908 / MS32) protein is Isoleucine--tRNA ligase.